A 485-amino-acid polypeptide reads, in one-letter code: Glutamyl-tRNA(Gln) amidotransferase subunit A (485 aa).

Active-site charge relay system residues include K78 and S153. S177 (acyl-ester intermediate) is an active-site residue.

Belongs to the amidase family. GatA subfamily. In terms of assembly, heterotrimer of A, B and C subunits.

The catalysed reaction is L-glutamyl-tRNA(Gln) + L-glutamine + ATP + H2O = L-glutaminyl-tRNA(Gln) + L-glutamate + ADP + phosphate + H(+). In terms of biological role, allows the formation of correctly charged Gln-tRNA(Gln) through the transamidation of misacylated Glu-tRNA(Gln) in organisms which lack glutaminyl-tRNA synthetase. The reaction takes place in the presence of glutamine and ATP through an activated gamma-phospho-Glu-tRNA(Gln). The polypeptide is Glutamyl-tRNA(Gln) amidotransferase subunit A (Bacillus cereus (strain ZK / E33L)).